A 185-amino-acid polypeptide reads, in one-letter code: Large ribosomal subunit protein uL15 (185 aa).

The interval 1-51 (MDLSSLRPAAGAVKNKKRVGRGQGSGNGTTAGKGNKGQQARSGYQKPINEG) is disordered. Residues 21–35 (RGQGSGNGTTAGKGN) are compositionally biased toward gly residues.

The protein belongs to the universal ribosomal protein uL15 family. As to quaternary structure, part of the 50S ribosomal subunit.

Functionally, binds to the 23S rRNA. In Chlorobium phaeobacteroides (strain DSM 266 / SMG 266 / 2430), this protein is Large ribosomal subunit protein uL15.